The primary structure comprises 60 residues: Putative per-hexamer repeat protein 1 (60 aa).

The polypeptide is Putative per-hexamer repeat protein 1 (Phxr1) (Mus musculus (Mouse)).